A 222-amino-acid chain; its full sequence is DnaJ homolog subfamily B member 9 (222 aa).

A signal peptide spans 1–23 (MATPQSVFVFAICILMITELILA). A J domain is found at 26–90 (SYYDILGVPK…NSRKEYDTIG (65 aa)). Positions 91-222 (HSAFTNGKGQ…VTTYTDCSGQ (132 aa)) are divergent targeting domain. Ser-133 bears the Phosphoserine mark.

Interacts with HSPA5/BiP; interaction is direct. Interacts with ERN1/IRE1 (via the luminal region). Interacts with DERL1. Not N-glycosylated.

Its subcellular location is the endoplasmic reticulum lumen. Functionally, co-chaperone for Hsp70 protein HSPA5/BiP that acts as a key repressor of the ERN1/IRE1-mediated unfolded protein response (UPR). J domain-containing co-chaperones stimulate the ATPase activity of Hsp70 proteins and are required for efficient substrate recognition by Hsp70 proteins. In the unstressed endoplasmic reticulum, interacts with the luminal region of ERN1/IRE1 and selectively recruits HSPA5/BiP: HSPA5/BiP disrupts the dimerization of the active ERN1/IRE1 luminal region, thereby inactivating ERN1/IRE1. Also involved in endoplasmic reticulum-associated degradation (ERAD) of misfolded proteins. Required for survival of B-cell progenitors and normal antibody production. The protein is DnaJ homolog subfamily B member 9 of Mus musculus (Mouse).